A 196-amino-acid chain; its full sequence is Leucyl/phenylalanyl-tRNA--protein transferase (196 aa).

This sequence belongs to the L/F-transferase family.

Its subcellular location is the cytoplasm. The enzyme catalyses N-terminal L-lysyl-[protein] + L-leucyl-tRNA(Leu) = N-terminal L-leucyl-L-lysyl-[protein] + tRNA(Leu) + H(+). It catalyses the reaction N-terminal L-arginyl-[protein] + L-leucyl-tRNA(Leu) = N-terminal L-leucyl-L-arginyl-[protein] + tRNA(Leu) + H(+). The catalysed reaction is L-phenylalanyl-tRNA(Phe) + an N-terminal L-alpha-aminoacyl-[protein] = an N-terminal L-phenylalanyl-L-alpha-aminoacyl-[protein] + tRNA(Phe). In terms of biological role, functions in the N-end rule pathway of protein degradation where it conjugates Leu, Phe and, less efficiently, Met from aminoacyl-tRNAs to the N-termini of proteins containing an N-terminal arginine or lysine. The chain is Leucyl/phenylalanyl-tRNA--protein transferase from Thermosynechococcus vestitus (strain NIES-2133 / IAM M-273 / BP-1).